The following is a 301-amino-acid chain: PWI domain-containing protein C825.05c (301 aa).

The PWI domain occupies 26–137 (STKFPASYDT…YGIPEKFILE (112 aa)). Serine 86 is modified (phosphoserine). Composition is skewed to basic and acidic residues over residues 145-182 (LKDR…ERNG), 189-205 (TLDR…ERNR), and 215-229 (RFSE…DIRS). Residues 145–301 (LKDRTEASKE…ESDSGTQKHD (157 aa)) are disordered. Phosphoserine is present on serine 199. The span at 244–253 (PTRRRERHYR) shows a compositional bias: basic residues. A compositionally biased stretch (basic and acidic residues) spans 254–289 (TRDDEGFDEFGRSRDGRWRESRTSYREKHRYDRDAL). Positions 290 to 301 (SSESDSGTQKHD) are enriched in polar residues. The residue at position 291 (serine 291) is a Phosphoserine.

It is found in the nucleus. This Schizosaccharomyces pombe (strain 972 / ATCC 24843) (Fission yeast) protein is PWI domain-containing protein C825.05c.